The sequence spans 377 residues: MMPLFNVLRSARMLPAVSKKVVSPPMMLRSVRELTNQSKNVYATKEVIIGASQKKKRSWVKWLSVSTLIIGGASYVGYLFTPDWREIVDSKHYYSNWKIRVYLSLPFNTASRVIGGLANQEIPVWLREHLLGGFARMYDCRMDDCVDPDFKNYPSFAAFFNRKLKESTRPISASPLVSPADGTVLHFGKVEDNKIEYVKGHDYDVDKFLGDVDLPQKDELDLYQVVIYLAPGDYHAFHSPARWVANQCRHVPGLLLSVRPTLLSHVPHLFCLNERVVLNGSWRHGFFSMSAVAATNVGDIVVDAEPSLRTNIVRRKTQKIMNTETEIHAPYVSGERVGEFRLGSTIVLVFQAPPTIKFAIKAGDPLRYGQSLVADGV.

A mitochondrion-targeting transit peptide spans 1–34; sequence MMPLFNVLRSARMLPAVSKKVVSPPMMLRSVREL. The Mitochondrial matrix portion of the chain corresponds to 35–61; the sequence is TNQSKNVYATKEVIIGASQKKKRSWVK. A helical membrane pass occupies residues 62 to 80; sequence WLSVSTLIIGGASYVGYLF. Topologically, residues 81 to 377 are mitochondrial intermembrane; sequence TPDWREIVDS…YGQSLVADGV (297 aa). Catalysis depends on charge relay system; for autoendoproteolytic cleavage activity residues Asp-181, His-238, and Ser-344. Residue Ser-344 is the Schiff-base intermediate with substrate; via pyruvic acid; for decarboxylase activity of the active site. Position 344 is a pyruvic acid (Ser); by autocatalysis (Ser-344).

The protein belongs to the phosphatidylserine decarboxylase family. PSD-B subfamily. Eukaryotic type I sub-subfamily. Heterodimer of a large membrane-associated beta subunit and a small pyruvoyl-containing alpha subunit. Pyruvate is required as a cofactor. Post-translationally, is synthesized initially as an inactive proenzyme. Formation of the active enzyme involves a self-maturation process in which the active site pyruvoyl group is generated from an internal serine residue via an autocatalytic post-translational modification. Two non-identical subunits are generated from the proenzyme in this reaction, and the pyruvate is formed at the N-terminus of the alpha chain, which is derived from the carboxyl end of the proenzyme. The autoendoproteolytic cleavage occurs by a canonical serine protease mechanism, in which the side chain hydroxyl group of the serine supplies its oxygen atom to form the C-terminus of the beta chain, while the remainder of the serine residue undergoes an oxidative deamination to produce ammonia and the pyruvoyl prosthetic group on the alpha chain. During this reaction, the Ser that is part of the protease active site of the proenzyme becomes the pyruvoyl prosthetic group, which constitutes an essential element of the active site of the mature decarboxylase.

It is found in the mitochondrion inner membrane. It carries out the reaction a 1,2-diacyl-sn-glycero-3-phospho-L-serine + H(+) = a 1,2-diacyl-sn-glycero-3-phosphoethanolamine + CO2. Its pathway is phospholipid metabolism; phosphatidylethanolamine biosynthesis; phosphatidylethanolamine from CDP-diacylglycerol: step 2/2. Its function is as follows. Catalyzes the formation of phosphatidylethanolamine (PtdEtn) from phosphatidylserine (PtdSer). Plays a central role in phospholipid metabolism and in the interorganelle trafficking of phosphatidylserine. The sequence is that of Phosphatidylserine decarboxylase proenzyme, mitochondrial from Caenorhabditis elegans.